The sequence spans 480 residues: Major capsid protein (480 aa).

It is found in the virion. Major protein of the capsid. The protein is Major capsid protein (MCP-1) of Trichoplusia ni ascovirus 2c (TnAV-2c).